The sequence spans 386 residues: MNIHEYQAKEILRKYGVPTSTGLVVTKTEKINEAIDKLNTKVYVVKAQIHAGGRGKAGGVKVVKSKEEAKKVAHDMFGINLVTHQTGPQGQKVNHLYIESGCDILKEYYFSIVFDRSASCITFIASTEGGVDIEAVAEKMPEKIIKFAVDPATGLQDFHMRGIAYGLGFKDSQAKQMKEIVKSVYNAFIETDATQIEINPLIINSYKNLLALDAKITFDDNGLFKHPNITAMRDHDEEDPLETRAANAGLSYVKMDGNIGCMVNGAGLAMATMDIIKLYGASPANFLDVGGGADRERVKEALKIILSDKEVKGILVNIFGGIMRCDIIAEGIIAAARDIGITVPLVVRLAGTNVEKGKEILSNSNLKIIPAHDLADAANKIVEAIR.

An ATP-grasp domain is found at 9–244 (KEILRKYGVP…HDEEDPLETR (236 aa)). Residues lysine 46, 53–55 (GRG), glutamate 99, cysteine 102, and glutamate 107 contribute to the ATP site. Residues asparagine 199 and aspartate 213 each coordinate Mg(2+). Substrate-binding positions include asparagine 264 and 321 to 323 (GIM).

Belongs to the succinate/malate CoA ligase beta subunit family. As to quaternary structure, heterotetramer of two alpha and two beta subunits. Mg(2+) is required as a cofactor.

The catalysed reaction is succinate + ATP + CoA = succinyl-CoA + ADP + phosphate. It catalyses the reaction GTP + succinate + CoA = succinyl-CoA + GDP + phosphate. The protein operates within carbohydrate metabolism; tricarboxylic acid cycle; succinate from succinyl-CoA (ligase route): step 1/1. Its function is as follows. Succinyl-CoA synthetase functions in the citric acid cycle (TCA), coupling the hydrolysis of succinyl-CoA to the synthesis of either ATP or GTP and thus represents the only step of substrate-level phosphorylation in the TCA. The beta subunit provides nucleotide specificity of the enzyme and binds the substrate succinate, while the binding sites for coenzyme A and phosphate are found in the alpha subunit. The polypeptide is Succinate--CoA ligase [ADP-forming] subunit beta (Rickettsia typhi (strain ATCC VR-144 / Wilmington)).